Reading from the N-terminus, the 1486-residue chain is MIVRSLLLAGSLLLASVVPASFTLAKSDGPQIKVKEFDKVPTDVHYFEDTDTIILSGKKAELYISTDAAASWNLLEGKSGILYPNKYHTQSAVIYGPNRKHWVTFDAAKTWREFEVPDKLVYGGGFMPFTFHGKDAEKVLISAEECQFMTCRHVTYYTTDGFKTVKRLFEGDMGCFWAVGNPAFGEGEPHLPDKLDDRVFCIWPHATPLDLTRRLVYSDTYFSDRKAVAVEAGGRDIKGVNNMASVKKFLILAASSVGTSEAAIYVSKDAVHWDRADFYGGPKVRGGKFTVLESTNYSIQVNVASRRSRVPIGSLFTSDSTGTSFTMNLDGVNEDKDMITDFEQVSGIQGIFLVNIVENAEEVKKGATREKKLVSRISFDDGRTFKPLKCGDKELHLHSITRPSNIGRTYSSPAPGLVMGIGNTGDKLGTYETGDTFVSNDAGVTWRKALDKAHKYEFGDQGSLLVAVFDEYKDKIFTDEISYSLNHGKDWKKAKLPHRVTALQLTTTPDSTSLQFLLVAEDEKKKFYVMSIDFSDIHERKCEKKDFERWPARLDEKGEPDCLMGHKQFYRRRKADADCFVKEKFKEPLPETEPCQCTKEDFECAAGFLRNKDYECEPHRKVSPPEGKCKNPDDKFMGPSGYRLIPGDDCLKKGGVDLEKEVERTCKDATKAPVSGQISVEKTPFKTKNLNYRYLERSDTSSGDDETVILKTDDGDLFVTRDHGKTWQRGKFKEPISLYIPHKYDNDVIYLLTEGKKAYWSIDRAHTFHSFEGKLPITRTLGTLPLYFHPDHPDWLIWIGGQDCKGKKCTDLAYYSKNRGDEWDLLLRGVGKCMFVGKEGELTADDLIFCSQHEHEDPSKSLRLISSDDMFTKKTSVHFDGKPIVGYAKMSEFIVVATKNGTELSSFTSVDGKTFAHAAFPPNYHIDAEYAYTVLDSSTHSIFLHVTDHPAKMHEFGSILKSNSNGTSYVLSLPNANRNDRDYVDFEKIQVVEGVALANIVINPDEVKAKGQEKKFRSLITHNDGSEWALLSPPKKDVEGKNFDCKVKDKGTDDCALHLHGFTERRENRDSMSSGSAVGLIIGVGNVGSSLTPRAESDTYMSRDAGITWHQIKKGRYQWEFGDQGSIVVVVAEEKPTKVLSYSLDEGETWTDFEFSDKEVTVEDISTVPSDTSRNFILWCRPGSSNEIVAYNVDFSGLKEREKQCVLKKESPEADDYYLWSPKHPMQKDNCLFGHVSMYHRKRPEAKCYNGPKLDRLSGEKKNCQCTRQDYECDYNYERQSDGSCALVKGLKPADPMQICKDDPEAIEYFEPTGYRKLPVSTCEGGHQLDHLVARPCPNKKKEFDEKHPGIGGFGLFFAIFFPVAIATGVGYWAFSKWDGKFGRIRLGESQPESIFSRDSPLISVPVTIVAGTVAVITALPLLFSSLWRSFRGYTRLPGSWWGQRQRPYASRGAFAARRGEYVGVVDDEDELLGAEEFEGDEEEDV.

The signal sequence occupies residues 1–25; it reads MIVRSLLLAGSLLLASVVPASFTLA. At 26–1349 the chain is on the lumenal side; sequence KSDGPQIKVK…KKKEFDEKHP (1324 aa). N-linked (GlcNAc...) asparagine glycosylation is present at Asn-296. 4 BNR repeats span residues 377 to 386, 437 to 447, 483 to 493, and 718 to 728; these read ISFDDGRTFK, FVSNDAGVTWR, YSLNHGKDWKK, and FVTRDHGKTWQ. N-linked (GlcNAc...) asparagine glycosylation is found at Asn-900 and Asn-965. 2 BNR repeats span residues 1100–1110 and 1142–1151; these read YMSRDAGITWH and YSLDEGETWT. Residues 1350–1370 traverse the membrane as a helical segment; sequence GIGGFGLFFAIFFPVAIATGV. Residues 1371-1401 lie on the Cytoplasmic side of the membrane; that stretch reads GYWAFSKWDGKFGRIRLGESQPESIFSRDSP. A helical membrane pass occupies residues 1402 to 1422; it reads LISVPVTIVAGTVAVITALPL. The Lumenal segment spans residues 1423 to 1486; the sequence is LFSSLWRSFR…EFEGDEEEDV (64 aa).

This sequence belongs to the VPS10-related sortilin family.

The protein resides in the golgi apparatus. It is found in the trans-Golgi network membrane. The protein localises to the prevacuolar compartment membrane. Its function is as follows. Functions as a sorting receptor in the Golgi compartment required for the intracellular sorting and delivery of soluble vacuolar proteins, like carboxypeptidase Y (CPY) and proteinase A. Executes multiple rounds of sorting by cycling between the late Golgi and a prevacuolar endosome-like compartment. The chain is Vacuolar protein sorting/targeting protein 10 (VPS10) from Arthroderma benhamiae (strain ATCC MYA-4681 / CBS 112371) (Trichophyton mentagrophytes).